The sequence spans 500 residues: Probable 26S proteasome non-ATPase regulatory subunit 3 (500 aa).

Positions 253 to 432 (ARFLYYLGRI…GYMRTKESTD (180 aa)) constitute a PCI domain. The tract at residues 462-484 (RYPPKSYGKELESAEERREREQQ) is disordered. Residues 468-484 (YGKELESAEERREREQQ) are compositionally biased toward basic and acidic residues.

This sequence belongs to the proteasome subunit S3 family. The 26S proteasome is composed of a core protease, known as the 20S proteasome, capped at one or both ends by the 19S regulatory complex (RC). The RC is composed of at least 18 different subunits in two subcomplexes, the base and the lid, which form the portions proximal and distal to the 20S proteolytic core, respectively.

Its function is as follows. Acts as a regulatory subunit of the 26 proteasome which is involved in the ATP-dependent degradation of ubiquitinated proteins. This is Probable 26S proteasome non-ATPase regulatory subunit 3 (DOXA2) from Anopheles stephensi (Indo-Pakistan malaria mosquito).